A 244-amino-acid chain; its full sequence is Probable transcriptional regulatory protein MMOB1910 (244 aa).

The protein belongs to the TACO1 family.

Its subcellular location is the cytoplasm. This is Probable transcriptional regulatory protein MMOB1910 from Mycoplasma mobile (strain ATCC 43663 / 163K / NCTC 11711) (Mesomycoplasma mobile).